Consider the following 343-residue polypeptide: Anthranilate phosphoribosyltransferase (343 aa).

5-phospho-alpha-D-ribose 1-diphosphate is bound by residues glycine 84, 87-88, threonine 92, 94-97, 112-120, and serine 124; these read GD, NIST, and KHGNRGVSS. Glycine 84 contacts anthranilate. Serine 96 lines the Mg(2+) pocket. Asparagine 115 serves as a coordination point for anthranilate. Arginine 170 lines the anthranilate pocket. Positions 229 and 230 each coordinate Mg(2+).

This sequence belongs to the anthranilate phosphoribosyltransferase family. As to quaternary structure, homodimer. Mg(2+) serves as cofactor.

The catalysed reaction is N-(5-phospho-beta-D-ribosyl)anthranilate + diphosphate = 5-phospho-alpha-D-ribose 1-diphosphate + anthranilate. It participates in amino-acid biosynthesis; L-tryptophan biosynthesis; L-tryptophan from chorismate: step 2/5. In terms of biological role, catalyzes the transfer of the phosphoribosyl group of 5-phosphorylribose-1-pyrophosphate (PRPP) to anthranilate to yield N-(5'-phosphoribosyl)-anthranilate (PRA). This Burkholderia thailandensis (strain ATCC 700388 / DSM 13276 / CCUG 48851 / CIP 106301 / E264) protein is Anthranilate phosphoribosyltransferase.